Consider the following 255-residue polypeptide: (R)-S-adenosyl-L-methionine hydrolase (255 aa).

Aspartate 9, aspartate 70, and asparagine 186 together coordinate adenosine. (R)-S-adenosyl-L-methionine is bound by residues asparagine 186, serine 227, glutamate 232, and valine 235. An adenosine-binding site is contributed by valine 235.

It belongs to the SAM hydrolase / SAM-dependent halogenase family. In terms of assembly, homotrimer.

The catalysed reaction is (R)-S-adenosyl-L-methionine + H2O = adenosine + L-methionine + H(+). In terms of biological role, catalyzes the hydrolysis of S-adenosyl-L-methionine (SAM) into adenosine and L-methionine. Does not have chlorinase or fluorinase activity. This is (R)-S-adenosyl-L-methionine hydrolase from Thermus thermophilus (strain ATCC 27634 / DSM 579 / HB8).